We begin with the raw amino-acid sequence, 305 residues long: NADH-ubiquinone oxidoreductase chain 1 (305 aa).

A run of 8 helical transmembrane segments spans residues 3-23 (WVAV…VGFY), 71-91 (VGPF…GWLL), 99-119 (VFYV…VYGV), 145-165 (YEIP…VFMF), 175-195 (LFFF…CMLA), 221-241 (GGGF…SSVM), 246-266 (FFGG…IFFV), and 285-305 (WTVL…LVGV).

This sequence belongs to the complex I subunit 1 family.

It is found in the mitochondrion inner membrane. It catalyses the reaction a ubiquinone + NADH + 5 H(+)(in) = a ubiquinol + NAD(+) + 4 H(+)(out). Core subunit of the mitochondrial membrane respiratory chain NADH dehydrogenase (Complex I) that is believed to belong to the minimal assembly required for catalysis. Complex I functions in the transfer of electrons from NADH to the respiratory chain. The immediate electron acceptor for the enzyme is believed to be ubiquinone. The polypeptide is NADH-ubiquinone oxidoreductase chain 1 (ND1) (Mytilus edulis (Blue mussel)).